Consider the following 534-residue polypeptide: Glycolytic genes transcriptional activator GCR2 (534 aa).

The disordered stretch occupies residues 29–122 (LQSVTNSPQT…TGNNASSSAT (94 aa)). Over residues 30–43 (QSVTNSPQTTTNTP) the composition is skewed to low complexity. The span at 64 to 88 (SDSTPNIDEIITSTGSNALTKTNSD) shows a compositional bias: polar residues. A compositionally biased stretch (low complexity) spans 89 to 122 (SANGTPNGNSSSTSAISNASNPATTGNNASSSAT). Residue S151 is modified to Phosphoserine. Positions 230–333 (LTQGRRKGNS…SNPGTNMLFD (104 aa)) are disordered. A compositionally biased stretch (polar residues) spans 238–252 (NSLNTSTKGSPSDLQ). Residues 253-279 (GINNGNNNGNNGNIGNGSNIKNYGNKN) show a composition bias toward low complexity. The short motif at 281–288 (PNNRTKKR) is the Nuclear localization signal element. Over residues 295–304 (NAKNGKNNKN) the composition is skewed to low complexity. Polar residues predominate over residues 312-328 (ITDTSAFSNTTISNPGT). Phosphoserine occurs at positions 406 and 409. Positions 497–534 (IVQLERELELQRQETQWLRKMLIEDMGCVRSMLRDLQR) are leucine-zipper.

As to quaternary structure, homodimer via the leucine-zipper domain. Forms a complex with a GCR1 homodimer.

It is found in the nucleus. Its function is as follows. Transcriptional activator required for the expression of glycolytic genes. Enhances the CT box-dependent transcriptional activation of a RAP1-GCR1 complex. Required for GCR1 phosphorylation. The chain is Glycolytic genes transcriptional activator GCR2 (GCR2) from Saccharomyces cerevisiae (strain ATCC 204508 / S288c) (Baker's yeast).